A 481-amino-acid polypeptide reads, in one-letter code: WD repeat-containing protein 55 homolog (481 aa).

A disordered region spans residues 1–116; the sequence is MHTHNHFKTP…NRDVETNFDL (116 aa). Composition is skewed to acidic residues over residues 12-23, 31-46, and 68-81; these read DAEEVDDLDDEM, IEQE…DDGF, and DSFD…DSDD. WD repeat units follow at residues 144–183, 188–227, 231–269, 272–311, 314–353, and 398–437; these read KLED…NKLI, VHSK…LKKL, AHDD…HVFE, QIDD…LYVQ, PYEE…YHCD, and QHNM…DFGD.

This sequence belongs to the WD repeat WDR55 family.

This is WD repeat-containing protein 55 homolog from Drosophila ananassae (Fruit fly).